Reading from the N-terminus, the 431-residue chain is Asparagine--tRNA ligase 1 (431 aa).

It belongs to the class-II aminoacyl-tRNA synthetase family. In terms of assembly, homodimer.

It is found in the cytoplasm. The enzyme catalyses tRNA(Asn) + L-asparagine + ATP = L-asparaginyl-tRNA(Asn) + AMP + diphosphate + H(+). The sequence is that of Asparagine--tRNA ligase 1 (asnS1) from Lactiplantibacillus plantarum (strain ATCC BAA-793 / NCIMB 8826 / WCFS1) (Lactobacillus plantarum).